The chain runs to 424 residues: Serine hydroxymethyltransferase (424 aa).

Residues Leu119 and 123 to 125 contribute to the (6S)-5,6,7,8-tetrahydrofolate site; that span reads GHL. N6-(pyridoxal phosphate)lysine is present on Lys228. 353-355 contacts (6S)-5,6,7,8-tetrahydrofolate; sequence SAF.

The protein belongs to the SHMT family. As to quaternary structure, homodimer. Requires pyridoxal 5'-phosphate as cofactor.

It is found in the cytoplasm. It catalyses the reaction (6R)-5,10-methylene-5,6,7,8-tetrahydrofolate + glycine + H2O = (6S)-5,6,7,8-tetrahydrofolate + L-serine. It functions in the pathway one-carbon metabolism; tetrahydrofolate interconversion. It participates in amino-acid biosynthesis; glycine biosynthesis; glycine from L-serine: step 1/1. In terms of biological role, catalyzes the reversible interconversion of serine and glycine with tetrahydrofolate (THF) serving as the one-carbon carrier. Also exhibits THF-independent aldolase activity toward beta-hydroxyamino acids, producing glycine and aldehydes, via a retro-aldol mechanism. This chain is Serine hydroxymethyltransferase, found in Natronomonas pharaonis (strain ATCC 35678 / DSM 2160 / CIP 103997 / JCM 8858 / NBRC 14720 / NCIMB 2260 / Gabara) (Halobacterium pharaonis).